The primary structure comprises 538 residues: Chaperonin GroEL 1 (538 aa).

ATP is bound by residues 29–32 (TLGP), 86–90 (DGTTT), Gly-413, and Asp-494.

This sequence belongs to the chaperonin (HSP60) family. As to quaternary structure, forms a cylinder of 14 subunits composed of two heptameric rings stacked back-to-back. Interacts with the co-chaperonin GroES.

The protein resides in the cytoplasm. The catalysed reaction is ATP + H2O + a folded polypeptide = ADP + phosphate + an unfolded polypeptide.. Together with its co-chaperonin GroES, plays an essential role in assisting protein folding. The GroEL-GroES system forms a nano-cage that allows encapsulation of the non-native substrate proteins and provides a physical environment optimized to promote and accelerate protein folding. This is Chaperonin GroEL 1 from Mycolicibacterium paratuberculosis (strain ATCC BAA-968 / K-10) (Mycobacterium paratuberculosis).